A 423-amino-acid chain; its full sequence is DUF21 domain-containing protein At2g14520 (423 aa).

Over 1–11 (MAVEYECCGTS) the chain is Extracellular. The region spanning 8–191 (CGTSFFIHIA…GKGGELTHDE (184 aa)) is the CNNM transmembrane domain. The chain crosses the membrane as a helical span at residues 12-32 (FFIHIAVIVLLVLFAGLMSGL). Topologically, residues 33–70 (TLGLMSMSLVDLEVLAKSGTPRDRIHAAKILPVVKNQH) are cytoplasmic. A helical transmembrane segment spans residues 71-91 (LLLCTLLICNAAAMEALPIFL). The Extracellular portion of the chain corresponds to 92 to 94 (DAL). Residues 95-115 (VTAWGAILISVTLILLFGEII) traverse the membrane as a helical segment. Residues 116–136 (PQSVCSRHGLAIGATVAPFVR) are Cytoplasmic-facing. The helical transmembrane segment at 137–157 (VLVWICLPVAWPISKLLDFLL) threads the bilayer. The Extracellular portion of the chain corresponds to 158–423 (GHGRVALFRR…DETDHHFEDL (266 aa)). One can recognise a CBS 1 domain in the interval 210-271 (MTPISDTFVI…TINPDEEIQV (62 aa)). Asn-273 and Asn-322 each carry an N-linked (GlcNAc...) asparagine glycan. CBS domains lie at 275-332 (TIRR…RVDV) and 356-415 (PNRA…IFDE).

It localises to the membrane. This is DUF21 domain-containing protein At2g14520 (CBSDUF3) from Arabidopsis thaliana (Mouse-ear cress).